Here is a 196-residue protein sequence, read N- to C-terminus: Adenylate kinase (196 aa).

10-15 contacts ATP; it reads GAGKGT. The tract at residues 30–59 is NMP; it reads STGDMLRAAVSAGTEIGKRAKAVMDAGGLV. AMP is bound by residues T31, R36, 57-59, 85-88, and Q92; these read GLV and GYPR. The segment at 126 to 142 is LID; it reads NRVAETIAAGGTVRSDD. R127 is a binding site for ATP. Positions 139 and 150 each coordinate AMP. Residue A178 participates in ATP binding.

This sequence belongs to the adenylate kinase family. As to quaternary structure, monomer.

The protein localises to the cytoplasm. The enzyme catalyses AMP + ATP = 2 ADP. It functions in the pathway purine metabolism; AMP biosynthesis via salvage pathway; AMP from ADP: step 1/1. Functionally, catalyzes the reversible transfer of the terminal phosphate group between ATP and AMP. Plays an important role in cellular energy homeostasis and in adenine nucleotide metabolism. In Agrobacterium fabrum (strain C58 / ATCC 33970) (Agrobacterium tumefaciens (strain C58)), this protein is Adenylate kinase.